Reading from the N-terminus, the 206-residue chain is Ribosomal RNA large subunit methyltransferase E (206 aa).

S-adenosyl-L-methionine contacts are provided by glycine 60, tryptophan 62, aspartate 80, aspartate 96, and aspartate 121. Lysine 161 functions as the Proton acceptor in the catalytic mechanism.

The protein belongs to the class I-like SAM-binding methyltransferase superfamily. RNA methyltransferase RlmE family.

It is found in the cytoplasm. It catalyses the reaction uridine(2552) in 23S rRNA + S-adenosyl-L-methionine = 2'-O-methyluridine(2552) in 23S rRNA + S-adenosyl-L-homocysteine + H(+). Functionally, specifically methylates the uridine in position 2552 of 23S rRNA at the 2'-O position of the ribose in the fully assembled 50S ribosomal subunit. The polypeptide is Ribosomal RNA large subunit methyltransferase E (Stutzerimonas stutzeri (strain A1501) (Pseudomonas stutzeri)).